The following is a 332-amino-acid chain: tRNA dimethylallyltransferase 2 (332 aa).

15–22 (GPTASGKT) is an ATP binding site. Position 17-22 (17-22 (TASGKT)) interacts with substrate. Interaction with substrate tRNA regions lie at residues 40–43 (DSVM) and 164–168 (QRIQR).

Belongs to the IPP transferase family. Monomer. Requires Mg(2+) as cofactor.

The enzyme catalyses adenosine(37) in tRNA + dimethylallyl diphosphate = N(6)-dimethylallyladenosine(37) in tRNA + diphosphate. Its function is as follows. Catalyzes the transfer of a dimethylallyl group onto the adenine at position 37 in tRNAs that read codons beginning with uridine, leading to the formation of N6-(dimethylallyl)adenosine (i(6)A). This Hahella chejuensis (strain KCTC 2396) protein is tRNA dimethylallyltransferase 2.